A 369-amino-acid chain; its full sequence is DNA replication and repair protein RecF (369 aa).

30–37 provides a ligand contact to ATP; it reads GDNAQGKT.

It belongs to the RecF family.

Its subcellular location is the cytoplasm. In terms of biological role, the RecF protein is involved in DNA metabolism; it is required for DNA replication and normal SOS inducibility. RecF binds preferentially to single-stranded, linear DNA. It also seems to bind ATP. This is DNA replication and repair protein RecF from Streptococcus equi subsp. equi (strain 4047).